The sequence spans 210 residues: Transmembrane protein 61 (210 aa).

A run of 2 helical transmembrane segments spans residues 18-38 (YCMT…FAWW) and 69-89 (VSFV…LWSV). The interval 140-172 (VAEGPPTPPAYPTEEALEPSGSRDALLSTQPAW) is disordered.

It is found in the membrane. The sequence is that of Transmembrane protein 61 (TMEM61) from Homo sapiens (Human).